We begin with the raw amino-acid sequence, 514 residues long: Protein farnesyltransferase subunit beta (514 aa).

Positions 1 to 13 (MRHHTKNLRRRAI) are enriched in basic residues. The interval 1-56 (MRHHTKNLRRRAIFLRTTPRGNMDSSSSVATSTSSSSNHRLVRSSEGSPSAGGDDI) is disordered. Positions 25 to 39 (SSSSVATSTSSSSNH) are enriched in low complexity. PFTB repeat units follow at residues 180–221 (AESL…AVVG), 231–272 (RRAL…SLLN), 293–334 (FTGL…SLLG), 346–388 (IERL…PLIE), and 410–454 (REGL…SSAQ). (2E,6E)-farnesyl diphosphate contacts are provided by residues 319–322 (HGAY) and 367–370 (RTNK). Zn(2+) is bound by residues Asp373 and Cys375. 376–379 (YSHW) is a binding site for (2E,6E)-farnesyl diphosphate. His442 contributes to the Zn(2+) binding site.

This sequence belongs to the protein prenyltransferase subunit beta family. Heterodimer of an alpha and a beta subunit. Interacts with RAS1 and RAS2. Zn(2+) serves as cofactor. In terms of tissue distribution, highly expressed in mycelium, conidium, conidial germination, early formed appressorium and the late infection hypha.

The protein resides in the cytoplasm. It carries out the reaction L-cysteinyl-[protein] + (2E,6E)-farnesyl diphosphate = S-(2E,6E)-farnesyl-L-cysteinyl-[protein] + diphosphate. In terms of biological role, catalyzes the transfer of a farnesyl moiety from farnesyl diphosphate to a cysteine at the fourth position from the C-terminus of several proteins having the C-terminal sequence Cys-aliphatic-aliphatic-X. The beta subunit is responsible for peptide-binding. The polypeptide is Protein farnesyltransferase subunit beta (RAM1) (Pyricularia oryzae (strain 70-15 / ATCC MYA-4617 / FGSC 8958) (Rice blast fungus)).